The chain runs to 321 residues: L-carnitine dehydrogenase (321 aa).

Residue 14-19 coordinates NAD(+); that stretch reads GAGVIG.

Belongs to the 3-hydroxyacyl-CoA dehydrogenase family. L-carnitine dehydrogenase subfamily. As to quaternary structure, homodimer.

It localises to the cytoplasm. It carries out the reaction carnitine + NAD(+) = 3-dehydrocarnitine + NADH + H(+). It participates in amine and polyamine metabolism; carnitine metabolism. In terms of biological role, catalyzes the NAD(+)-dependent oxidation of L-carnitine to 3-dehydrocarnitine. The protein is L-carnitine dehydrogenase of Burkholderia mallei (strain ATCC 23344).